A 309-amino-acid polypeptide reads, in one-letter code: Tyrosine recombinase XerD (309 aa).

In terms of domain architecture, Core-binding (CB) spans 3-88 (MRASLAIENF…ALRQFFRFLY (86 aa)). Positions 109–302 (PLPKIMSVEN…LEERLHKLVS (194 aa)) constitute a Tyr recombinase domain. Catalysis depends on residues Arg-158, Lys-182, His-254, Arg-257, and His-280. The O-(3'-phospho-DNA)-tyrosine intermediate role is filled by Tyr-289.

Belongs to the 'phage' integrase family. XerD subfamily. As to quaternary structure, forms a cyclic heterotetrameric complex composed of two molecules of XerC and two molecules of XerD.

The protein localises to the cytoplasm. In terms of biological role, site-specific tyrosine recombinase, which acts by catalyzing the cutting and rejoining of the recombining DNA molecules. The XerC-XerD complex is essential to convert dimers of the bacterial chromosome into monomers to permit their segregation at cell division. It also contributes to the segregational stability of plasmids. This Brucella melitensis biotype 1 (strain ATCC 23456 / CCUG 17765 / NCTC 10094 / 16M) protein is Tyrosine recombinase XerD.